The primary structure comprises 109 residues: 12 kDa heat shock protein (109 aa).

Residues 1-21 show a composition bias toward basic and acidic residues; that stretch reads MSDAGRKGFGEKASEALKPDS. The segment at 1-82 is disordered; sequence MSDAGRKGFG…SLADQARDYM (82 aa). Ser21 bears the Phosphoserine; by ATM or ATR mark. Ser24 carries the post-translational modification Phosphoserine. Basic and acidic residues-rich tracts occupy residues 28 to 50 and 58 to 67; these read QGKE…EDNK and DSAEKGKDNA. 3 positions are modified to phosphoserine: Ser59, Ser73, and Ser97.

This sequence to S.pombe hsp9 and C.albicans WH11.

Its function is as follows. May play a role in a switch from carbohydrate utilizing metabolism to fatty acid utilizing metabolism. This chain is 12 kDa heat shock protein (HSP12), found in Saccharomyces cerevisiae (strain ATCC 204508 / S288c) (Baker's yeast).